The chain runs to 93 residues: MNPNARDTDKDGDVRPVFTAPKPLSMSILSVINELICSEMQLRFYYHSGDMIPMSDLYRLLTKCTTTPDLMVRKLIEMNVIGVTDNANVVVLK.

This is an uncharacterized protein from Acidianus sp. F28 (AFV-2).